We begin with the raw amino-acid sequence, 459 residues long: Ribosomal protein uS12 methylthiotransferase RimO (459 aa).

An MTTase N-terminal domain is found at 11–126 (PKVGMVSLGC…VMQAVHSHLP (116 aa)). Residues Cys20, Cys56, Cys85, Cys157, Cys161, and Cys164 each contribute to the [4Fe-4S] cluster site. Positions 143–388 (LTPRHYAYLK…MEVAEEVSAA (246 aa)) constitute a Radical SAM core domain. A TRAM domain is found at 391 to 459 (ARKVGKTLKV…ADGHDLWGEV (69 aa)).

The protein belongs to the methylthiotransferase family. RimO subfamily. It depends on [4Fe-4S] cluster as a cofactor.

It localises to the cytoplasm. It catalyses the reaction L-aspartate(89)-[ribosomal protein uS12]-hydrogen + (sulfur carrier)-SH + AH2 + 2 S-adenosyl-L-methionine = 3-methylsulfanyl-L-aspartate(89)-[ribosomal protein uS12]-hydrogen + (sulfur carrier)-H + 5'-deoxyadenosine + L-methionine + A + S-adenosyl-L-homocysteine + 2 H(+). Functionally, catalyzes the methylthiolation of an aspartic acid residue of ribosomal protein uS12. The protein is Ribosomal protein uS12 methylthiotransferase RimO of Burkholderia pseudomallei (strain K96243).